Here is a 122-residue protein sequence, read N- to C-terminus: Small ribosomal subunit protein uS13 (122 aa).

Residues R93 to K122 form a disordered region.

This sequence belongs to the universal ribosomal protein uS13 family. As to quaternary structure, part of the 30S ribosomal subunit. Forms a loose heterodimer with protein S19. Forms two bridges to the 50S subunit in the 70S ribosome.

In terms of biological role, located at the top of the head of the 30S subunit, it contacts several helices of the 16S rRNA. In the 70S ribosome it contacts the 23S rRNA (bridge B1a) and protein L5 of the 50S subunit (bridge B1b), connecting the 2 subunits; these bridges are implicated in subunit movement. Contacts the tRNAs in the A and P-sites. The sequence is that of Small ribosomal subunit protein uS13 from Chelativorans sp. (strain BNC1).